A 99-amino-acid chain; its full sequence is NADH-quinone oxidoreductase subunit K (99 aa).

3 consecutive transmembrane segments (helical) span residues 3 to 23, 28 to 48, and 59 to 79; these read LVNY…TVLV, IIMF…FVAF, and VVAF…LAII.

This sequence belongs to the complex I subunit 4L family. NDH-1 is composed of 14 different subunits. Subunits NuoA, H, J, K, L, M, N constitute the membrane sector of the complex.

It localises to the cell membrane. The catalysed reaction is a quinone + NADH + 5 H(+)(in) = a quinol + NAD(+) + 4 H(+)(out). Its function is as follows. NDH-1 shuttles electrons from NADH, via FMN and iron-sulfur (Fe-S) centers, to quinones in the respiratory chain. The immediate electron acceptor for the enzyme in this species is believed to be a menaquinone. Couples the redox reaction to proton translocation (for every two electrons transferred, four hydrogen ions are translocated across the cytoplasmic membrane), and thus conserves the redox energy in a proton gradient. The chain is NADH-quinone oxidoreductase subunit K from Beutenbergia cavernae (strain ATCC BAA-8 / DSM 12333 / CCUG 43141 / JCM 11478 / NBRC 16432 / NCIMB 13614 / HKI 0122).